The sequence spans 413 residues: Peptidase T (413 aa).

A Zn(2+)-binding site is contributed by His84. Asp86 is an active-site residue. Residue Asp147 participates in Zn(2+) binding. Glu181 functions as the Proton acceptor in the catalytic mechanism. 3 residues coordinate Zn(2+): Glu182, Asp204, and His386.

It belongs to the peptidase M20B family. Zn(2+) is required as a cofactor.

It is found in the cytoplasm. The catalysed reaction is Release of the N-terminal residue from a tripeptide.. Cleaves the N-terminal amino acid of tripeptides. In Ligilactobacillus salivarius (strain UCC118) (Lactobacillus salivarius), this protein is Peptidase T.